The sequence spans 671 residues: DNA ligase (671 aa).

NAD(+)-binding positions include 38–42 (DKEFD), 87–88 (SL), and glutamate 113. The active-site N6-AMP-lysine intermediate is lysine 115. The NAD(+) site is built by arginine 136, glutamate 170, lysine 282, and lysine 306. Cysteine 396, cysteine 399, cysteine 414, and cysteine 419 together coordinate Zn(2+). In terms of domain architecture, BRCT spans 586–671 (SDLQPFVGQS…LLKQEGIAID (86 aa)).

Belongs to the NAD-dependent DNA ligase family. LigA subfamily. Mg(2+) is required as a cofactor. Requires Mn(2+) as cofactor.

It carries out the reaction NAD(+) + (deoxyribonucleotide)n-3'-hydroxyl + 5'-phospho-(deoxyribonucleotide)m = (deoxyribonucleotide)n+m + AMP + beta-nicotinamide D-nucleotide.. DNA ligase that catalyzes the formation of phosphodiester linkages between 5'-phosphoryl and 3'-hydroxyl groups in double-stranded DNA using NAD as a coenzyme and as the energy source for the reaction. It is essential for DNA replication and repair of damaged DNA. The polypeptide is DNA ligase (Leptospira biflexa serovar Patoc (strain Patoc 1 / Ames)).